Here is a 216-residue protein sequence, read N- to C-terminus: MVLWVFGYGSLIWNPGFDFDEKLIGYIKDYKRVFDLACIDHRGTPEHPARTCTLEQSTGAICWGAAYCVRGGPEKEKLAMEYLERRECEYDSKTLVEFYTENDTSTPIVTGVIVFTSTPDKVSNKYYLGPAPLEEMARQIATASGPCGNNREYLFKLEKAMFDIEHEEEYVIELANEVRKQLDLPEEVKALLKPIVSHVSVKSQAHVSTRQRVFAS.

5–10 (VFGYGS) is a binding site for substrate. E87 acts as the Proton acceptor in catalysis.

Belongs to the gamma-glutamylcyclotransferase family. Mn(2+) is required as a cofactor. As to expression, expressed in the central vascular bundle of roots, leaf veins, hydathodes, cauline leaves, shoot apex, sepal veins, flower receptacles and developing seeds.

It localises to the cytoplasm. It carries out the reaction an alpha-(gamma-L-glutamyl)-L-amino acid = 5-oxo-L-proline + an L-alpha-amino acid. In terms of biological role, catalyzes the formation of 5-oxoproline from gamma-glutamyl dipeptides and plays a significant role in glutathione (GSH) homeostasis. Converts both GSH and gamma-glutamyl-L-alanine to 5-oxoproline in vitro. Plays a role in detoxification of heavy metals and metalloids by recycling glutamate and maintaining GSH homeostasis. In Arabidopsis thaliana (Mouse-ear cress), this protein is Gamma-glutamylcyclotransferase 2-1.